A 250-amino-acid polypeptide reads, in one-letter code: Cell division protein ZapD (250 aa).

The protein belongs to the ZapD family. As to quaternary structure, interacts with FtsZ.

The protein resides in the cytoplasm. Cell division factor that enhances FtsZ-ring assembly. Directly interacts with FtsZ and promotes bundling of FtsZ protofilaments, with a reduction in FtsZ GTPase activity. This is Cell division protein ZapD from Photorhabdus laumondii subsp. laumondii (strain DSM 15139 / CIP 105565 / TT01) (Photorhabdus luminescens subsp. laumondii).